A 108-amino-acid polypeptide reads, in one-letter code: UPF0145 protein LCABL_07110 (108 aa).

This sequence belongs to the UPF0145 family.

The chain is UPF0145 protein LCABL_07110 from Lacticaseibacillus casei (strain BL23) (Lactobacillus casei).